The following is a 228-amino-acid chain: 2,3-bisphosphoglycerate-dependent phosphoglycerate mutase (228 aa).

Substrate contacts are provided by residues 8–15 (RHGQSAWN), 21–22 (TG), Arg60, 87–90 (ERHY), Lys98, 114–115 (RR), and 180–181 (GN). His9 (tele-phosphohistidine intermediate) is an active-site residue. The Proton donor/acceptor role is filled by Glu87.

It belongs to the phosphoglycerate mutase family. BPG-dependent PGAM subfamily. As to quaternary structure, homodimer.

The enzyme catalyses (2R)-2-phosphoglycerate = (2R)-3-phosphoglycerate. It participates in carbohydrate degradation; glycolysis; pyruvate from D-glyceraldehyde 3-phosphate: step 3/5. In terms of biological role, catalyzes the interconversion of 2-phosphoglycerate and 3-phosphoglycerate. This is 2,3-bisphosphoglycerate-dependent phosphoglycerate mutase from Rhizorhabdus wittichii (strain DSM 6014 / CCUG 31198 / JCM 15750 / NBRC 105917 / EY 4224 / RW1) (Sphingomonas wittichii).